The following is a 425-amino-acid chain: Trigger factor (425 aa).

The region spanning 163–248 is the PPIase FKBP-type domain; the sequence is GDTAVIDFEG…VHEIKTKELP (86 aa).

Belongs to the FKBP-type PPIase family. Tig subfamily.

The protein resides in the cytoplasm. It carries out the reaction [protein]-peptidylproline (omega=180) = [protein]-peptidylproline (omega=0). In terms of biological role, involved in protein export. Acts as a chaperone by maintaining the newly synthesized protein in an open conformation. Functions as a peptidyl-prolyl cis-trans isomerase. In Bacillus anthracis (strain A0248), this protein is Trigger factor.